We begin with the raw amino-acid sequence, 244 residues long: 5-oxoprolinase subunit A (244 aa).

The protein belongs to the LamB/PxpA family. Forms a complex composed of PxpA, PxpB and PxpC.

The enzyme catalyses 5-oxo-L-proline + ATP + 2 H2O = L-glutamate + ADP + phosphate + H(+). Functionally, catalyzes the cleavage of 5-oxoproline to form L-glutamate coupled to the hydrolysis of ATP to ADP and inorganic phosphate. The chain is 5-oxoprolinase subunit A from Shigella dysenteriae serotype 1 (strain Sd197).